The following is a 457-amino-acid chain: Cysteine--tRNA ligase (457 aa).

Cysteine 27 is a binding site for Zn(2+). The short motif at 29 to 39 (ITPQSEPHIGH) is the 'HIGH' region element. 3 residues coordinate Zn(2+): cysteine 207, histidine 232, and glutamate 236. A 'KMSKS' region motif is present at residues 265 to 269 (KMSKS). Lysine 268 serves as a coordination point for ATP.

It belongs to the class-I aminoacyl-tRNA synthetase family. As to quaternary structure, monomer. The cofactor is Zn(2+).

Its subcellular location is the cytoplasm. The enzyme catalyses tRNA(Cys) + L-cysteine + ATP = L-cysteinyl-tRNA(Cys) + AMP + diphosphate. In Dehalococcoides mccartyi (strain ATCC BAA-2100 / JCM 16839 / KCTC 5957 / BAV1), this protein is Cysteine--tRNA ligase.